The following is a 29-amino-acid chain: Brevinin-2Tc (29 aa).

A disulfide bridge links Cys23 with Cys29.

This sequence belongs to the frog skin active peptide (FSAP) family. Brevinin subfamily. As to expression, expressed by the skin glands.

The protein localises to the secreted. Its function is as follows. Antibacterial activity against representative Gram-negative and Gram-positive bacteria. The sequence is that of Brevinin-2Tc from Rana temporaria (European common frog).